We begin with the raw amino-acid sequence, 189 residues long: Homeobox protein HD-2 (189 aa).

The segment at residues 119-181 (KPRTRANFPM…NARRRILPFM (63 aa)) is a DNA-binding region (homeobox; TALE-type).

This sequence belongs to the TALE/KNOX homeobox family.

The protein resides in the nucleus. The polypeptide is Homeobox protein HD-2 (HD-2) (Encephalitozoon cuniculi (strain GB-M1) (Microsporidian parasite)).